A 463-amino-acid chain; its full sequence is MSRRQTLKTLQKLILAPSQHISLSIASNLSVIPSRSMTTTATVPVLPTSIHDGLGKGIAYEKSLPRPVNPFSHRVPGREIITIPKFTLESGVEMRNVPVAYMSWGKLSSKANNVMIICHALSGSADVSDWWGPLLGHGKAFDTDKFFVICMNSLGSPYGTASPVTAKNGDYSEGWYGADFPSTTIRDDVRLHKLALDKLGVRKVAAAIGGSMGGMHVLEWAFFGKDYVRCIVPAATSSHQSAWAIGWGEAQRHAIRSDVKYKNGRYGFDDPPVLGLEAARMTALLTYRSRDSLERRFGRDTGSKKKTQKQESKTLPSNSTPIHSHSGADETPVAFDRADSSFAAQSYLRYQAKKFSNRFDSNCYIALTNKLDTHDLARGRTRTITEALSLIEQPTLVLGIRSDGLYTLAEQEQIARAVPNAKLREIVSDDGHDAFLIEWSQLNWLLIGFLHESLPDIMQRAAL.

One can recognise an AB hydrolase-1 domain in the interval 113–436 (NVMIICHALS…VSDDGHDAFL (324 aa)). The Nucleophile role is filled by serine 211. The span at 296 to 312 (RFGRDTGSKKKTQKQES) shows a compositional bias: basic and acidic residues. The interval 296 to 331 (RFGRDTGSKKKTQKQESKTLPSNSTPIHSHSGADET) is disordered. Residues aspartate 403 and histidine 432 contribute to the active site.

The protein belongs to the AB hydrolase superfamily. MetX family.

It catalyses the reaction L-homoserine + acetyl-CoA = O-acetyl-L-homoserine + CoA. Its pathway is mycotoxin biosynthesis. Functionally, homoserine O-acetyltransferase; part of the gene cluster that mediates the biosynthesis of fusaric acid, a mycotoxin with low to moderate toxicity to animals and humans, but with high phytotoxic properties. L-aspartate is suggested as fusaric acid amino acid precursor that is activated and further processed to O-acetyl-L-homoserine by cluster enzymes aspartate kinase FUB3 and homoserine O-acetyltransferase FUB5, as well as enzymes of the primary metabolism. The polyketide synthase (PKS) FUB1 generates the triketide trans-2-hexenal which is presumptively released by the hydrolase FUB4 and linked to the NRPS-bound amino acid precursor by NAD(P)-dependent dehydrogenase FUB6. FUB1, FUB4, and the non-canonical NRPS Fub8 may form an enzyme complex. Further processing of the NRPS-bound intermediate might be carried out by FUB6 and the sulfhydrylase FUB7, enabling a spontaneous electrocyclization to close the carbon backbone of fusaric acid. Dihydrofusaric acid is likely to be released via reduction by the thioester reductase (TR) domain of FUB8 whereupon the final oxidation to fusaric acid may (also) be performed by the FMN-dependent dehydrogenase FUB9. This Gibberella moniliformis (strain M3125 / FGSC 7600) (Maize ear and stalk rot fungus) protein is Homoserine O-acetyltransferase FUB5.